Reading from the N-terminus, the 577-residue chain is MNIQALLSEKVRQAMIAAGAPADCEPQVRQSAKVQFGDYQANGMMAVAKKLGMAPRQLAEQVLTHLDLNGIASKVEIAGPGFINIFLDPAFLAEHVQQALASDRLGVSTPEKQTIVVDYSAPNVAKEMHVGHLRSTIIGDAAVRTLEFLGHKVIRANHVGDWGTQFGMLIAWLEKQQQENAGEMELADLEGFYRDAKKHYDEDEEFAERARNYVVKLQSGDEYFREMWRKLVDITMTQNQITYDRLNVTLTRDDVMGESLYNPMLPGIVADLKAKGLAVESEGATVVFLDEFKNKEGEPMGVIIQKKDGGYLYTTTDIACAKYRYETLHADRVLYYIDSRQHQHLMQAWAIVRKAGYVPESVPLEHHMFGMMLGKDGKPFKTRAGGTVKLADLLDEALERARRLVAEKNPDMPADELEKLANAVGIGAVKYADLSKNRTTDYIFDWDNMLAFEGNTAPYMQYAYTRVLSVFRKAEINEEQLAAAPVIIREDREAQLAARLLQFEETLTVVAREGTPHVMCAYLYDLAGLFSGFYEHCPILSAENEEVRNSRLKLAQLTAKTLKLGLDTLGIETVERM.

Positions P122 to H132 match the 'HIGH' region motif.

The protein belongs to the class-I aminoacyl-tRNA synthetase family. As to quaternary structure, monomer.

Its subcellular location is the cytoplasm. It carries out the reaction tRNA(Arg) + L-arginine + ATP = L-arginyl-tRNA(Arg) + AMP + diphosphate. This Escherichia coli O8 (strain IAI1) protein is Arginine--tRNA ligase.